The following is a 412-amino-acid chain: uncharacterized protein (412 aa).

Over residues 1–17 the composition is skewed to polar residues; that stretch reads MPSQGNNKNSENITQNP. 3 disordered regions span residues 1-20, 223-243, and 310-412; these read MPSQGNNKNSENITQNPIEG, EQAVGQPIEQQSISDDEARQT, and QKQM…NPVA. Residues 340–355 show a composition bias toward polar residues; sequence KLNSNTRGSSKRPSVN. A compositionally biased stretch (gly residues) spans 361–379; the sequence is GQRGRGGRGFYRGGRGRGG. A compositionally biased stretch (low complexity) spans 390–402; it reads SNSNNSTSQPSPN. Over residues 403 to 412 the composition is skewed to polar residues; sequence AELSNFNPVA.

This is an uncharacterized protein from Schizosaccharomyces pombe (strain 972 / ATCC 24843) (Fission yeast).